A 318-amino-acid chain; its full sequence is Acetyl-coenzyme A carboxylase carboxyl transferase subunit alpha (318 aa).

The CoA carboxyltransferase C-terminal domain maps to Arg41 to Ser295.

The protein belongs to the AccA family. In terms of assembly, acetyl-CoA carboxylase is a heterohexamer composed of biotin carboxyl carrier protein (AccB), biotin carboxylase (AccC) and two subunits each of ACCase subunit alpha (AccA) and ACCase subunit beta (AccD).

The protein localises to the cytoplasm. It carries out the reaction N(6)-carboxybiotinyl-L-lysyl-[protein] + acetyl-CoA = N(6)-biotinyl-L-lysyl-[protein] + malonyl-CoA. Its pathway is lipid metabolism; malonyl-CoA biosynthesis; malonyl-CoA from acetyl-CoA: step 1/1. Functionally, component of the acetyl coenzyme A carboxylase (ACC) complex. First, biotin carboxylase catalyzes the carboxylation of biotin on its carrier protein (BCCP) and then the CO(2) group is transferred by the carboxyltransferase to acetyl-CoA to form malonyl-CoA. This chain is Acetyl-coenzyme A carboxylase carboxyl transferase subunit alpha, found in Idiomarina loihiensis (strain ATCC BAA-735 / DSM 15497 / L2-TR).